The sequence spans 340 residues: S-adenosylmethionine:tRNA ribosyltransferase-isomerase (340 aa).

The protein belongs to the QueA family. Monomer.

Its subcellular location is the cytoplasm. The enzyme catalyses 7-aminomethyl-7-carbaguanosine(34) in tRNA + S-adenosyl-L-methionine = epoxyqueuosine(34) in tRNA + adenine + L-methionine + 2 H(+). The protein operates within tRNA modification; tRNA-queuosine biosynthesis. Functionally, transfers and isomerizes the ribose moiety from AdoMet to the 7-aminomethyl group of 7-deazaguanine (preQ1-tRNA) to give epoxyqueuosine (oQ-tRNA). The chain is S-adenosylmethionine:tRNA ribosyltransferase-isomerase from Chromobacterium violaceum (strain ATCC 12472 / DSM 30191 / JCM 1249 / CCUG 213 / NBRC 12614 / NCIMB 9131 / NCTC 9757 / MK).